The primary structure comprises 2286 residues: Unconventional myosin-IXAb (2286 aa).

Residues 16 to 114 form the Ras-associating domain; it reads SEFTLRVYPG…YRFLLREKNL (99 aa). The Myosin motor domain occupies 148–971; that stretch reads AQFVADLCSL…LRQRLQDELH (824 aa). A helical transmembrane segment spans residues 178-198; sequence IYTYVGSILIAVNPFKFLPIY. 242 to 249 contributes to the ATP binding site; the sequence is GESGSGKT. Positions 853–875 are actin-binding; it reads LNKLMETLGQSEPYFVKCIRSNA. IQ domains lie at 976-996, 1025-1054, 1066-1095, and 1089-1118; these read RRIV…HFCR, QQGA…AVLI, RNTA…AAVT, and QRRA…QQCR. A neck or regulatory domain region spans residues 976-1113; that stretch reads RRIVCLQRSF…QSRQRCRILR (138 aa). Residues 1114-2254 are tail; sequence EQQCREQSKH…PRANRSCPPK (1141 aa). Disordered stretches follow at residues 1118 to 1279, 1308 to 1341, 1455 to 1588, and 1732 to 1754; these read REQS…QIRE, DVPL…FSVS, CEED…EPML, and DGTI…SDTV. Polar residues predominate over residues 1123 to 1133; it reads HPSTVTKSLHQ. Over residues 1134–1149 the composition is skewed to basic and acidic residues; sequence NTEEAEKLEEVWEKQT. Polar residues predominate over residues 1263–1273; the sequence is PINSAPQTPNR. The span at 1455-1465 shows a compositional bias: acidic residues; sequence CEEDEDDEYED. The segment covering 1485–1501 has biased composition (basic and acidic residues); the sequence is CVFHSDSEMSSQKEQKR. Basic residues predominate over residues 1529-1542; sequence RGKMRFWSKSKHGD. 2 stretches are compositionally biased toward basic and acidic residues: residues 1550–1562 and 1572–1585; these read RSAD…RRND and GVSE…ENRE. A Phorbol-ester/DAG-type zinc finger spans residues 1759–1808; the sequence is GHIFKSTQYSIPTYCEFCSSLIWMMDKACVCKLCRYACHKKCCLRMTTKC. Residues 1823–2011 enclose the Rho-GAP domain; that stretch reads VELSRLTSDE…LIICEQMRKY (189 aa). Positions 2032-2049 are enriched in basic residues; sequence LTHIRRSMGKSRARKSGH. Disordered regions lie at residues 2032–2087 and 2113–2286; these read LTHI…QQEE and PRAS…EFMV. Positions 2080-2107 form a coiled coil; sequence QAAMQQEEKVLTQQIENLQKEKEELTYE. Low complexity-rich tracts occupy residues 2176–2192 and 2200–2211; these read SLDS…SVSS and SSSSGPLFSSSS. Residues 2226-2238 are compositionally biased toward polar residues; the sequence is EQASLSARCASSS. Over residues 2254-2270 the composition is skewed to basic and acidic residues; that stretch reads KPREPGDTGGRRREHEF.

The protein belongs to the TRAFAC class myosin-kinesin ATPase superfamily. Myosin family.

It localises to the membrane. The protein localises to the cytoplasm. The protein resides in the synapse. It is found in the cell projection. Its subcellular location is the growth cone. Myosins are actin-based motor molecules with ATPase activity. Unconventional myosins serve in intracellular movements. Regulates Rho by stimulating it's GTPase activity in neurons. Required for the regulation of neurite branching and motor neuron axon guidance. The sequence is that of Unconventional myosin-IXAb (myo9ab) from Danio rerio (Zebrafish).